A 232-amino-acid polypeptide reads, in one-letter code: Flagellar L-ring protein (232 aa).

The first 15 residues, 1-15 (MKKVLFYVLPFAFFG), serve as a signal peptide directing secretion. The N-palmitoyl cysteine moiety is linked to residue C16. A lipid anchor (S-diacylglycerol cysteine) is attached at C16.

This sequence belongs to the FlgH family. In terms of assembly, the basal body constitutes a major portion of the flagellar organelle and consists of four rings (L,P,S, and M) mounted on a central rod.

It is found in the cell outer membrane. The protein resides in the bacterial flagellum basal body. Its function is as follows. Assembles around the rod to form the L-ring and probably protects the motor/basal body from shearing forces during rotation. The sequence is that of Flagellar L-ring protein from Campylobacter jejuni subsp. jejuni serotype O:23/36 (strain 81-176).